The chain runs to 355 residues: UDP-N-acetylglucosamine--N-acetylmuramyl-(pentapeptide) pyrophosphoryl-undecaprenol N-acetylglucosamine transferase (355 aa).

UDP-N-acetyl-alpha-D-glucosamine is bound by residues 15–17 (TGG), N127, R163, S191, I244, 263–268 (ALTVSE), and Q288.

It belongs to the glycosyltransferase 28 family. MurG subfamily.

The protein localises to the cell inner membrane. It catalyses the reaction di-trans,octa-cis-undecaprenyl diphospho-N-acetyl-alpha-D-muramoyl-L-alanyl-D-glutamyl-meso-2,6-diaminopimeloyl-D-alanyl-D-alanine + UDP-N-acetyl-alpha-D-glucosamine = di-trans,octa-cis-undecaprenyl diphospho-[N-acetyl-alpha-D-glucosaminyl-(1-&gt;4)]-N-acetyl-alpha-D-muramoyl-L-alanyl-D-glutamyl-meso-2,6-diaminopimeloyl-D-alanyl-D-alanine + UDP + H(+). Its pathway is cell wall biogenesis; peptidoglycan biosynthesis. Functionally, cell wall formation. Catalyzes the transfer of a GlcNAc subunit on undecaprenyl-pyrophosphoryl-MurNAc-pentapeptide (lipid intermediate I) to form undecaprenyl-pyrophosphoryl-MurNAc-(pentapeptide)GlcNAc (lipid intermediate II). This is UDP-N-acetylglucosamine--N-acetylmuramyl-(pentapeptide) pyrophosphoryl-undecaprenol N-acetylglucosamine transferase from Salmonella typhi.